The following is a 463-amino-acid chain: Oxidoreductase OXR1 (463 aa).

6-hydroxy-FAD-binding positions include 59 to 63 (GGSYS), V154, and D366.

Belongs to the FAD-dependent oxidoreductase family. The cofactor is 6-hydroxy-FAD.

Its pathway is siderophore biosynthesis. In terms of biological role, oxidoreductase; part of the gene cluster that mediates the biosynthesis of hydroxamate-containing siderophores that play a critical role in virulence via intracellular iron acquisition during macrophage infection. The polypeptide is Oxidoreductase OXR1 (Ajellomyces capsulatus (Darling's disease fungus)).